The following is a 326-amino-acid chain: Glyoxylate/hydroxypyruvate reductase B (326 aa).

Active-site residues include Arg-237 and Glu-266. His-285 (proton donor) is an active-site residue.

Belongs to the D-isomer specific 2-hydroxyacid dehydrogenase family. GhrB subfamily. In terms of assembly, homodimer.

It localises to the cytoplasm. The enzyme catalyses glycolate + NADP(+) = glyoxylate + NADPH + H(+). The catalysed reaction is (R)-glycerate + NAD(+) = 3-hydroxypyruvate + NADH + H(+). It carries out the reaction (R)-glycerate + NADP(+) = 3-hydroxypyruvate + NADPH + H(+). Its function is as follows. Catalyzes the NADPH-dependent reduction of glyoxylate and hydroxypyruvate into glycolate and glycerate, respectively. The chain is Glyoxylate/hydroxypyruvate reductase B from Yersinia pseudotuberculosis serotype O:1b (strain IP 31758).